The following is a 377-amino-acid chain: Probable protein phosphatase 2C 61 (377 aa).

Residues 30 to 338 form the PPM-type phosphatase domain; it reads AAGEFSMAAA…DDITAVVVFL (309 aa). Mn(2+) contacts are provided by aspartate 64, glycine 65, aspartate 269, and aspartate 329.

Belongs to the PP2C family. It depends on Mg(2+) as a cofactor. The cofactor is Mn(2+).

It carries out the reaction O-phospho-L-seryl-[protein] + H2O = L-seryl-[protein] + phosphate. It catalyses the reaction O-phospho-L-threonyl-[protein] + H2O = L-threonyl-[protein] + phosphate. The protein is Probable protein phosphatase 2C 61 of Oryza sativa subsp. japonica (Rice).